Consider the following 444-residue polypeptide: ATP-dependent protease ATPase subunit HslU (444 aa).

ATP contacts are provided by residues Ile-20 and 62-67 (GVGKTE). The tract at residues 130 to 158 (EDRILDALVPPPRGASGEPERGEDNSARQ) is disordered. ATP is bound by residues Asp-257, Glu-322, and Arg-394.

This sequence belongs to the ClpX chaperone family. HslU subfamily. In terms of assembly, a double ring-shaped homohexamer of HslV is capped on each side by a ring-shaped HslU homohexamer. The assembly of the HslU/HslV complex is dependent on binding of ATP.

It localises to the cytoplasm. Its function is as follows. ATPase subunit of a proteasome-like degradation complex; this subunit has chaperone activity. The binding of ATP and its subsequent hydrolysis by HslU are essential for unfolding of protein substrates subsequently hydrolyzed by HslV. HslU recognizes the N-terminal part of its protein substrates and unfolds these before they are guided to HslV for hydrolysis. The protein is ATP-dependent protease ATPase subunit HslU of Bordetella parapertussis (strain 12822 / ATCC BAA-587 / NCTC 13253).